We begin with the raw amino-acid sequence, 400 residues long: Tyrosine--tRNA ligase (400 aa).

The 'HIGH' region signature appears at 42 to 51 (PTAPDLHLGH). The short motif at 226-230 (KMSKS) is the 'KMSKS' region element. Position 229 (Lys229) interacts with ATP. The S4 RNA-binding domain maps to 339–399 (FSISYILRRA…GKKKIAQIFV (61 aa)).

This sequence belongs to the class-I aminoacyl-tRNA synthetase family. TyrS type 2 subfamily. Homodimer.

The protein resides in the cytoplasm. The catalysed reaction is tRNA(Tyr) + L-tyrosine + ATP = L-tyrosyl-tRNA(Tyr) + AMP + diphosphate + H(+). In terms of biological role, catalyzes the attachment of tyrosine to tRNA(Tyr) in a two-step reaction: tyrosine is first activated by ATP to form Tyr-AMP and then transferred to the acceptor end of tRNA(Tyr). The chain is Tyrosine--tRNA ligase from Hahella chejuensis (strain KCTC 2396).